A 336-amino-acid chain; its full sequence is UDP-N-acetylmuramoylpentapeptide-lysine N(6)-alanyltransferase (336 aa).

Substrate is bound by residues 37–40 (KNNW), tyrosine 104, arginine 212, tyrosine 216, and tyrosine 257.

Belongs to the FemABX family.

It catalyses the reaction UDP-N-acetyl-alpha-D-muramoyl-L-alanyl-gamma-D-glutamyl-L-lysyl-D-alanyl-D-alanine + L-alanyl-tRNA(Ala) = UDP-N-acetyl-alpha-D-muramoyl-L-alanyl-gamma-D-glutamyl-N(6)-(L-alanyl)-L-lysyl-D-alanyl-D-alanine + tRNA(Ala) + H(+). In terms of biological role, involved in the synthesis of the bacterial cell wall. Catalyzes the addition of alanine into the interchain peptide bridge of peptidoglycan precursor using aminoacyl-tRNA(Ala) as amino acid donor. This alanine is added to the epsilon-amino group of the L-lysine of the peptidoglycan UDP-N-acetyl-alpha-D-muramoyl-L-alanyl-D-glutamyl-L-lysyl-D-alanyl-D-alanine, in a ribosome-independent mechanism. Specific for UDP-N-acetyl-muramoyl-pentapeptide. Has no activity toward UDP-N-acetyl-muramoyl-tetrapeptide or UDP-N-acetyl-muramoyl-tripeptide. Also acts on L-seryl-tRNA(Ser). This Weissella viridescens (Lactobacillus viridescens) protein is UDP-N-acetylmuramoylpentapeptide-lysine N(6)-alanyltransferase.